We begin with the raw amino-acid sequence, 2362 residues long: MAYLLRSVVTIIDVFYKYTKQDEECGTLSKDELKELLEKEFRPILKNPDDPDTVDVIMHMLDRDHDRRLDFTEFILMIFKLALACNKVLGKEYCKASGSKKHRRGHQHQEEESETEEEEETPRQKSGFRFSSWSEGEEHGHSSGGSRGPAKHRRGSNSKRLERQDELSSSEESRKKHHGSIFGHSWSSNKEKDGSRSEELGEKGDKSYDSPSRESEEEYESGYRLNHQGREGHSGLSCGLEKNKYELNYIQLRKGGEQKLGYNTSSSGNSKIQSHVYGFSNSSGCCRPKNASSSCQASRSQGQGNQSCRTQSNCQSGTSGGQGYGCVSEGQSSRCCQPKPRSCSQSSSQRGYGSKQCGQPQNCGRQQRMGSSHSSCCGPYGSGATQSSGCGQQRMSSCGHSSSSHQKGCSSNGFSKGDQRASGSGHSSCCEQHGTNSSQSSGFKQHGHESGQSCCGQHGTASSQSSGYSQHRVGSGQSCHYGQHGSSSGQSSSSGRHGSGSGQSSSSRHNRSGSSQSSGLEEHGSSSHQSHSSGHHGSGSRQSSGSEQHGAVSGQSSGSGKHETGPSQSSSSGHHGSGSQQHGGGSGQSTGFGEHESSSGHSSSSGQHRSGSRHSSGSGKHESGRSQSSGSGHHGSGSQQHGGGSGNSTGFGEHGSSSHPLPSSGQNESSSGQSSRSERHGTGSGQSSGFGQHGSGSHQSSSSGHNEYGSGQTSSSWPHGKGSGQESGYGEQESGHGQSSSSWQHGTGPGQSSSSEEEESRPGQSSSSWQHGKGSGQESGYGEQEAGHGQSSSSWQHGTGAGNQSSGYGEHKSGPSHSSRSWHHGTGSGQSLGFGQHGKGSHQSESSGHYESVSEPSSSSWQHGNGSGESYGYGEHESGHGQSSSAWNHGNESGQSNGYGEHESGHGQSSSAWNHGNESGQSNGFGENESGRDQEGYQQRESFHGQHRHPLSQHEQHSQFGYGRSPRSPVHPESSEGEEHSVVPRRYSGYGHGQGQAGHQQRESGYGQRGRPQGPSQDSSRQPQAGHGQPSQSGYGRSPRRSQVHPEYSEGEAHSEVSQRHSGSSHCHCHCHGQARHQQRESVHGQRGRPQGPSQDSSRHPQAGPGQPSQSGSRRSPRSQPVHPESSEGEEHSVVPQRHSGSGHGHGQGQGQAGHQQRESVHGQQGRPQGPSQDSSRQPQAGQGQPSQSGSGRSPRRSPVHPESSEGEEHSVVPQRHSGSGHGHGQGQGQGQAGHQQRESVHGQRSRPQGPFQDSSRQPQAGQGQPSQSGSGRSPRRSPVHPESSEGEEHSVVPQRHSGSGHGHGQGQGQAGHQQRESVHGQPVRPEVPTQDSSRQPQAGQGQPSQSGSGRSPRRSPVHPESSEGEEHSVVPQRNSESCHCHCHDQAGHQQRESVHGQRGRPQGPSQDSSRHPQAGPGQPSQSGSRRSPRSSPVHPESSEGEEHSVVPQRHSGSGHGHGQGQGQAGHQQRESVHGQRGRPQGPTQDSSRQPQAGQGQPSQSGSGRSPRRSPVHPESSEGEEHSVVPQRHSGSGHGHGHGQGQGQAGHQQRESVHGQRGRPQGPSQDSSRQPQAGQGQPSQSGSGRSPRRSPVHPESSEGEEHSVVPQRYSGSGHGHGQGQAGHQQRESVHGQRGRPQGPSQDSSRQPQAGQGQPSQSGSGRSPRRSPVHPESSEGEEHSVIPQRHSGSGHSHGQGQVHAEHQQRESVHGQRGRPQGPSQDSSRQPQAGQGQPSLSGSGRSPRRSPVHPESSEGEEHSVVPQRHSHSESGHGHGQGQGQAGHQQRESVHGQRGRPQGPSQDSSRQPQAGQGQPSQSGSGRSPGRSPVHPESSEGEEHSVVPQRHSESGHGHGQGQGQAGHQQRESVHGQRGRPQGPSQDSSRQPQAGQGQPSQSGSGRSPRRSPVHPESSEGEEHSVVPQRHSGSGHGHGQGQGQAGHQQRESVHGQPVRPQGPSQDSSSQPQASQGQPSQSGSGRSPRRSPVHPESSEGEEHSVVPQRHSGSGHGHGQGQGQAGHQQRESLHGQRGRSQSPFHPSHSIHWQSKCTISKKSSRLSGHYGRNHFQSTISGNQYDSSQSSRHGSYGPQDYDYGQSGYGPSGRLRSNSQSSIPFSSAHRATNMEVLPCGQSFSPSDHVGTKANEQIGELVFKYRESETGPDQSVDYYNLTESNSTTRGHECSHGHSVVVPEHSDDSDFNYGHSYNGKQQICQSQPTVQSCFDDSQYILFQKHLESPSFGNQSGFSPNERQLYTCNESIDSYHLSSDSNNRNQIYSSNNSFPNLYCIGTEQCIYLPSATILGEGTEGQEPGYTQPGTICKYNQFLDGRKSRTRGNHETGKMKSGSAYLDSNTPLYTYVQEQKSYYFE.

The segment at 1–81 is S-100-like; sequence MAYLLRSVVT…TEFILMIFKL (81 aa). EF-hand domains are found at residues 8-43 and 49-84; these read VVTI…EFRP and DDPD…LALA. Positions 62, 64, 66, 68, and 73 each coordinate Ca(2+). Disordered regions lie at residues 96–238 and 284–2109; these read ASGS…GLSC and GCCR…SSIP. Acidic residues predominate over residues 111-120; the sequence is EESETEEEEE. Composition is skewed to basic and acidic residues over residues 159 to 174 and 189 to 214; these read KRLE…EESR and NKEK…PSRE. 2 Filaggrin repeats span residues 261-308 and 373-414; these read GYNT…NQSC and HSSC…SNGF. Composition is skewed to polar residues over residues 284 to 317, 342 to 375, and 383 to 395; these read GCCR…CQSG, SCSQ…SHSS, and GATQ…QQRM. Residues 396 to 411 are compositionally biased toward low complexity; sequence SSCGHSSSSHQKGCSS. Composition is skewed to polar residues over residues 421-443 and 450-469; these read ASGS…SSGF and SGQS…SGYS. 3 stretches are compositionally biased toward low complexity: residues 474 to 519, 539 to 550, and 567 to 580; these read GSGQ…QSSG, GSRQSSGSEQHG, and SQSS…SGSQ. The Filaggrin 3 repeat unit spans residues 555-607; the sequence is QSSGSGKHETGPSQSSSSGHHGSGSQQHGGGSGQSTGFGEHESSSGHSSSSGQ. A compositionally biased stretch (gly residues) spans 581 to 590; sequence QHGGGSGQST. Residues 599–618 are compositionally biased toward low complexity; that stretch reads SGHSSSSGQHRSGSRHSSGS. A compositionally biased stretch (gly residues) spans 632-653; that stretch reads GHHGSGSQQHGGGSGNSTGFGE. The span at 654-675 shows a compositional bias: low complexity; sequence HGSSSHPLPSSGQNESSSGQSS. The stretch at 672–723 is one Filaggrin 4 repeat; that stretch reads GQSSRSERHGTGSGQSSGFGQHGSGSHQSSSSGHNEYGSGQTSSSWPHGKGS. Gly residues predominate over residues 682-694; the sequence is TGSGQSSGFGQHG. 3 stretches are compositionally biased toward low complexity: residues 695 to 705, 728 to 754, and 780 to 798; these read SGSHQSSSSGH, GYGE…QSSS, and GYGE…WQHG. Gly residues predominate over residues 826–838; sequence TGSGQSLGFGQHG. Low complexity predominate over residues 846–864; it reads SSGHYESVSEPSSSSWQHG. Residues 880-927 form a Filaggrin 5 repeat; sequence HGQSSSAWNHGNESGQSNGYGEHESGHGQSSSAWNHGNESGQSNGFGE. Composition is skewed to polar residues over residues 886–896 and 912–925; these read AWNHGNESGQS and AWNH…SNGF. Residues 973-982 are compositionally biased toward basic and acidic residues; that stretch reads ESSEGEEHSV. The Filaggrin 6 repeat unit spans residues 984-1035; the sequence is PRRYSGYGHGQGQAGHQQRESGYGQRGRPQGPSQDSSRQPQAGHGQPSQSGY. A compositionally biased stretch (polar residues) spans 1014–1035; that stretch reads GPSQDSSRQPQAGHGQPSQSGY. The segment covering 1047-1059 has biased composition (basic and acidic residues); the sequence is EYSEGEAHSEVSQ. Basic residues predominate over residues 1067-1077; it reads CHCHCHGQARH. The segment covering 1104-1121 has biased composition (low complexity); it reads GPGQPSQSGSRRSPRSQP. Over residues 1142–1152 the composition is skewed to gly residues; the sequence is SGHGHGQGQGQ. Polar residues predominate over residues 1162-1174; that stretch reads HGQQGRPQGPSQD. The Filaggrin 7 repeat unit spans residues 1165 to 1210; the sequence is QGRPQGPSQDSSRQPQAGQGQPSQSGSGRSPRRSPVHPESSEGEEH. Residues 1175 to 1193 show a composition bias toward low complexity; the sequence is SSRQPQAGQGQPSQSGSGR. Phosphoserine is present on residues Ser-1198, Ser-1204, and Ser-1205. Over residues 1220–1232 the composition is skewed to gly residues; the sequence is SGHGHGQGQGQGQ. Positions 1255 to 1273 are enriched in low complexity; that stretch reads SSRQPQAGQGQPSQSGSGR. A phosphoserine mark is found at Ser-1278, Ser-1284, and Ser-1285. One copy of the Filaggrin 8 repeat lies at 1280 to 1334; that stretch reads VHPESSEGEEHSVVPQRHSGSGHGHGQGQGQAGHQQRESVHGQPVRPEVPTQDSS. Gly residues predominate over residues 1300-1310; it reads SGHGHGQGQGQ. Residues 1333 to 1351 are compositionally biased toward low complexity; the sequence is SSRQPQAGQGQPSQSGSGR. Residues Ser-1356, Ser-1362, and Ser-1363 each carry the phosphoserine modification. A compositionally biased stretch (basic and acidic residues) spans 1377–1396; the sequence is ESCHCHCHDQAGHQQRESVH. The span at 1413-1436 shows a compositional bias: low complexity; it reads PQAGPGQPSQSGSRRSPRSSPVHP. 2 positions are modified to phosphoserine: Ser-1438 and Ser-1439. Residues 1454–1464 show a composition bias toward gly residues; the sequence is SGHGHGQGQGQ. The stretch at 1474–1522 is one Filaggrin 9 repeat; that stretch reads HGQRGRPQGPTQDSSRQPQAGQGQPSQSGSGRSPRRSPVHPESSEGEEH. The span at 1487–1505 shows a compositional bias: low complexity; the sequence is SSRQPQAGQGQPSQSGSGR. Residues Ser-1510, Ser-1516, and Ser-1517 each carry the phosphoserine modification. Residues 1532–1544 are compositionally biased toward gly residues; it reads SGHGHGHGQGQGQ. The segment covering 1567–1585 has biased composition (low complexity); sequence SSRQPQAGQGQPSQSGSGR. Phosphoserine occurs at positions 1590, 1596, and 1597. Composition is skewed to low complexity over residues 1643–1661 and 1683–1696; these read SSRQ…GSGR and QRHS…GQGQ. Over residues 1698-1708 the composition is skewed to basic and acidic residues; sequence HAEHQQRESVH. A Filaggrin 10 repeat occupies 1723–1756; that stretch reads RQPQAGQGQPSLSGSGRSPRRSPVHPESSEGEEH. The segment covering 1724–1739 has biased composition (low complexity); sequence QPQAGQGQPSLSGSGR. 6 positions are modified to phosphoserine: Ser-1744, Ser-1750, Ser-1751, Ser-1824, Ser-1830, and Ser-1831. A compositionally biased stretch (low complexity) spans 1801 to 1825; the sequence is SSRQPQAGQGQPSQSGSGRSPGRSP. Residues 1829 to 1848 are compositionally biased toward basic and acidic residues; that stretch reads ESSEGEEHSVVPQRHSESGH. The segment covering 1879–1897 has biased composition (low complexity); the sequence is SSRQPQAGQGQPSQSGSGR. A phosphoserine mark is found at Ser-1902, Ser-1908, and Ser-1909. Positions 1924-1934 are enriched in gly residues; it reads SGHGHGQGQGQ. A compositionally biased stretch (low complexity) spans 1949-1975; sequence RPQGPSQDSSSQPQASQGQPSQSGSGR. Residues Ser-1980, Ser-1986, and Ser-1987 each carry the phosphoserine modification. Gly residues predominate over residues 2002–2012; it reads SGHGHGQGQGQ. The Filaggrin 11 repeat unit spans residues 2016-2070; the sequence is QQRESLHGQRGRSQSPFHPSHSIHWQSKCTISKKSSRLSGHYGRNHFQSTISGNQ. Polar residues-rich tracts occupy residues 2026-2048, 2061-2079, and 2100-2109; these read GRSQ…TISK, HFQS…SSRH, and LRSNSQSSIP. Position 2104 is a phosphoserine (Ser-2104). The Filaggrin 12 repeat unit spans residues 2218-2259; it reads DDSQYILFQKHLESPSFGNQSGFSPNERQLYTCNESIDSYHL.

The protein belongs to the S100-fused protein family. In the N-terminal section; belongs to the S-100 family. Deiminated by PADI1, PADI2 or PADI3 in vitro. The deiminated form is degraded by calpain-1/CAPN1 more quickly and into shorter peptides than the intact protein. In terms of processing, may be processed by calpain-1/CAPN1.

Its subcellular location is the cytoplasm. The protein resides in the cytoplasmic granule. Essential for normal cell-cell adhesion in the cornified cell layers. Important for proper integrity and mechanical strength of the stratum corneum of the epidermis. The protein is Filaggrin-2 (Flg2) of Mus musculus (Mouse).